The chain runs to 222 residues: CEACAM1-like protein UL7 (222 aa).

N-linked (GlcNAc...) asparagine; by host glycosylation is found at N50, N56, N60, N71, N105, N109, N125, N132, N147, N164, N168, and N189. Residues 193 to 213 form a helical membrane-spanning segment; the sequence is LALVGVVVFLVLIVVCIMGWW.

It belongs to the RL11 family. Post-translationally, highly glycosylated.

It localises to the secreted. Its subcellular location is the host cell membrane. Its function is as follows. Plays a role in modulating the host immune response and affecting host cytokine production. Structurally and functionally homolog of host CEACAM1, induces endothelial cell angiogenesis. This chain is CEACAM1-like protein UL7 (UL7), found in Homo sapiens (Human).